The following is a 60-amino-acid chain: MDAKLLEILVCPICKGPLHYKKNEQELICKPCRLAYPIQDGIPVMLEDEARKLPAEEEVE.

Belongs to the UPF0434 family.

The sequence is that of UPF0434 protein Mfla_2088 from Methylobacillus flagellatus (strain ATCC 51484 / DSM 6875 / VKM B-1610 / KT).